A 159-amino-acid polypeptide reads, in one-letter code: Ribosomal RNA large subunit methyltransferase H (159 aa).

S-adenosyl-L-methionine-binding positions include I76, G108, and 127–132 (FSKMTF).

It belongs to the RNA methyltransferase RlmH family. In terms of assembly, homodimer.

Its subcellular location is the cytoplasm. The catalysed reaction is pseudouridine(1915) in 23S rRNA + S-adenosyl-L-methionine = N(3)-methylpseudouridine(1915) in 23S rRNA + S-adenosyl-L-homocysteine + H(+). In terms of biological role, specifically methylates the pseudouridine at position 1915 (m3Psi1915) in 23S rRNA. The chain is Ribosomal RNA large subunit methyltransferase H from Clostridium botulinum (strain Loch Maree / Type A3).